Consider the following 5218-residue polypeptide: HC-toxin synthetase (5218 aa).

Positions Ser223–Leu620 are adenylation 1. The 75-residue stretch at Met769–Gln843 folds into the Carrier 1 domain. The residue at position 803 (Ser803) is an O-(pantetheine 4'-phosphoryl)serine. The interval Ile858–Tyr1154 is condensation 1. An epimerization region spans residues Glu1338–Ala1806. The tract at residues Ser1828–Met2233 is adenylation 2. Positions Glu2379–Gln2453 constitute a Carrier 2 domain. Ser2414 carries the post-translational modification O-(pantetheine 4'-phosphoryl)serine. The interval Glu2531–Thr2929 is condensation 2. Positions Leu2979–Arg3386 are adenylation 3. Positions Gln3532–Gln3608 constitute a Carrier 3 domain. Position 3569 is an O-(pantetheine 4'-phosphoryl)serine (Ser3569). A condensation 3 region spans residues Glu3649–Glu4102. The interval Arg4134–Ser4530 is adenylation 4. One can recognise a Carrier 4 domain in the interval Thr4666 to Asn4740. Position 4701 is an O-(pantetheine 4'-phosphoryl)serine (Ser4701). The interval Thr4785 to Ala5101 is condensation 4.

It belongs to the NRP synthetase family. The cofactor is pantetheine 4'-phosphate.

The protein operates within mycotoxin biosynthesis; HC-toxin biosynthesis. Non-ribosomal peptide synthetase, part of the diffuse TOX2 gene cluster that mediates the biosynthesis of the HC-toxin, cyclic tetrapeptide of structure cyclo(D-Pro-L-Ala-D-Ala-L-Aeo), where Aeo stands for 2-amino-9,10-epoxi-8-oxodecanoic acid. HC-toxin is a determinant of specificity and virulence in the interaction between the producing fungus and its host, maize. HTS1, contains four modules, one for each amino acid in HC-toxin, with the order of activation being most likely Pro, Ala, Ala, and Aeo. In addition, HTS1 has one epimerase domain between modules 1 and 2, which is responsible for epimerizing L-Pro to D-Pro. The absence of an epimerizing domain after module 3, for producing D-Ala, can be explained by the presence in the cluster of TOXG, an Ala racemase, which produces D-Ala for incorporation by HTS1 into HC-toxin. The chain is HC-toxin synthetase from Cochliobolus carbonum (Maize leaf spot fungus).